The primary structure comprises 482 residues: G patch domain-containing protein 2-like (482 aa).

Residues Ser31, Ser86, and Ser88 each carry the phosphoserine modification. A Phosphothreonine modification is found at Thr91. Disordered regions lie at residues 195 to 222 (SQPG…SECD) and 408 to 482 (KRKR…TNGC). Positions 198 to 215 (GRKERMECEAEEQKHGSD) are enriched in basic and acidic residues. Positions 414–427 (VASASFSSPSPVHP) are enriched in low complexity. The segment covering 468–482 (EKNSGCSSSPGTNGC) has biased composition (polar residues).

The protein is G patch domain-containing protein 2-like (Gpatch2l) of Mus musculus (Mouse).